We begin with the raw amino-acid sequence, 73 residues long: RNA-binding protein Hfq (73 aa).

The Sm domain maps to 8-68; that stretch reads DQFLNQIRKE…ISTFAPQKNV (61 aa).

Belongs to the Hfq family. In terms of assembly, homohexamer.

Functionally, RNA chaperone that binds small regulatory RNA (sRNAs) and mRNAs to facilitate mRNA translational regulation in response to envelope stress, environmental stress and changes in metabolite concentrations. Also binds with high specificity to tRNAs. This is RNA-binding protein Hfq from Bacillus licheniformis (strain ATCC 14580 / DSM 13 / JCM 2505 / CCUG 7422 / NBRC 12200 / NCIMB 9375 / NCTC 10341 / NRRL NRS-1264 / Gibson 46).